The following is a 435-amino-acid chain: Adenylosuccinate lyase (435 aa).

N(6)-(1,2-dicarboxyethyl)-AMP-binding positions include 4 to 5, 73 to 75, and 99 to 100; these read RY, RHD, and TS. The active-site Proton donor/acceptor is the histidine 147. Residue glutamine 218 coordinates N(6)-(1,2-dicarboxyethyl)-AMP. Serine 268 (proton donor/acceptor) is an active-site residue. N(6)-(1,2-dicarboxyethyl)-AMP contacts are provided by residues serine 269, 274 to 276, asparagine 282, and 313 to 317; these read KKN and SAERV.

This sequence belongs to the lyase 1 family. Adenylosuccinate lyase subfamily. As to quaternary structure, homotetramer. Residues from neighboring subunits contribute catalytic and substrate-binding residues to each active site.

It catalyses the reaction N(6)-(1,2-dicarboxyethyl)-AMP = fumarate + AMP. The enzyme catalyses (2S)-2-[5-amino-1-(5-phospho-beta-D-ribosyl)imidazole-4-carboxamido]succinate = 5-amino-1-(5-phospho-beta-D-ribosyl)imidazole-4-carboxamide + fumarate. It participates in purine metabolism; AMP biosynthesis via de novo pathway; AMP from IMP: step 2/2. The protein operates within purine metabolism; IMP biosynthesis via de novo pathway; 5-amino-1-(5-phospho-D-ribosyl)imidazole-4-carboxamide from 5-amino-1-(5-phospho-D-ribosyl)imidazole-4-carboxylate: step 2/2. Catalyzes two reactions in de novo purine nucleotide biosynthesis. Catalyzes the breakdown of 5-aminoimidazole- (N-succinylocarboxamide) ribotide (SAICAR or 2-[5-amino-1-(5-phospho-beta-D-ribosyl)imidazole-4-carboxamido]succinate) to 5-aminoimidazole-4-carboxamide ribotide (AICAR or 5-amino-1-(5-phospho-beta-D-ribosyl)imidazole-4-carboxamide) and fumarate, and of adenylosuccinate (ADS or N(6)-(1,2-dicarboxyethyl)-AMP) to adenosine monophosphate (AMP) and fumarate. This Deinococcus radiodurans (strain ATCC 13939 / DSM 20539 / JCM 16871 / CCUG 27074 / LMG 4051 / NBRC 15346 / NCIMB 9279 / VKM B-1422 / R1) protein is Adenylosuccinate lyase (purB).